The primary structure comprises 760 residues: Protein HEADING DATE 3B (760 aa).

Gly residues-rich tracts occupy residues 1–12 (MATRGGGGGGGG) and 60–70 (SGGGGGGGVGG). Disordered stretches follow at residues 1–120 (MATR…KINK), 144–169 (SRSTAEAPQRRAENTIKSSSGKRLAD), 236–262 (VKSRTPLKDKEMEAAQTSKNVEVEKSS), and 285–346 (TGII…IEET). Residues 71–87 (SPAHSTSAASQSQSQSQ) are compositionally biased toward low complexity. The segment covering 94–107 (SLFQPFNVPSNRPG) has biased composition (polar residues). A compositionally biased stretch (basic and acidic residues) spans 108-120 (HSTEKINSDKINK). The segment covering 236-248 (VKSRTPLKDKEME) has biased composition (basic and acidic residues). Positions 349-355 (KRKRLLE) match the Nuclear localization signal motif. Disordered regions lie at residues 485–543 (LQQP…GVQL) and 707–760 (FPTV…QRDD). 3 stretches are compositionally biased toward polar residues: residues 511 to 522 (QRDQAATNGVSK), 531 to 543 (ASDNKQNNWGVQL), and 707 to 730 (FPTVSAQNNQPQPSYSSRDNQTNV).

Expressed in mesophyll cells of young leaves, anthers, stigmas and the top of lemmas.

The protein resides in the nucleus. Its function is as follows. Involved in the regulation of flowering time under short day (SD) and long day (LD) conditions. Functions as a floral promoter by negatively regulating GHD7, a repressor of the photoperiodic control of flowering. Acts as a floral activator in the LD photoperiodic pathway. Involved in blue light-induced activation of EHD1 expression to promote flowering under SD conditions. The polypeptide is Protein HEADING DATE 3B (HD3B) (Oryza sativa subsp. japonica (Rice)).